The primary structure comprises 266 residues: Probable BRI1 kinase inhibitor 1 (266 aa).

Disordered regions lie at residues 1 to 144 (MTMN…AKTR) and 167 to 242 (FSRH…SEES). Positions 9 to 30 (RSQPPPPHPPLFKPTTPPPPPL) are enriched in pro residues. Residues 31–40 (LSTSTSTSPP) show a composition bias toward low complexity. Residues 77-93 (LSHNNYSSKANQHRQTG) are compositionally biased toward polar residues. Residues 100-109 (SKEKDREYKA) show a composition bias toward basic and acidic residues. 2 stretches are compositionally biased toward low complexity: residues 210–221 (LSSAPASLRASP) and 229–241 (VGGS…SSEE).

Its function is as follows. Negative regulator of brassinosteroid signaling. This is Probable BRI1 kinase inhibitor 1 (BKI1) from Oryza sativa subsp. indica (Rice).